The chain runs to 634 residues: Glutamate--tRNA ligase (634 aa).

The 'HIGH' region signature appears at 108–118 (PNPSGPLHIGH).

Belongs to the class-I aminoacyl-tRNA synthetase family. Glutamate--tRNA ligase type 2 subfamily.

The protein localises to the cytoplasm. The enzyme catalyses tRNA(Glu) + L-glutamate + ATP = L-glutamyl-tRNA(Glu) + AMP + diphosphate. Catalyzes the attachment of glutamate to tRNA(Glu) in a two-step reaction: glutamate is first activated by ATP to form Glu-AMP and then transferred to the acceptor end of tRNA(Glu). This is Glutamate--tRNA ligase from Methanoregula boonei (strain DSM 21154 / JCM 14090 / 6A8).